We begin with the raw amino-acid sequence, 174 residues long: MNSLLIMGYTSFDLGIFNEKDIKVSIIKKTIRRKLINFLEEGLRWIIFTGNLGFEYWALEVAKELQTDYDFQIGTIFSFETHGQNWNESNQVKLAAFKQVDFVKYAFETYESPSQFRQYNDFILENTEGAFVFYDEENETKLKYMVEKMKQNTNYEVYLLDFEDLQETFEEMNE.

The protein belongs to the UPF0398 family.

The polypeptide is UPF0398 protein YfdB (yfdB) (Lactococcus lactis subsp. lactis (strain IL1403) (Streptococcus lactis)).